A 256-amino-acid chain; its full sequence is tRNA (guanine-N(7)-)-methyltransferase (256 aa).

S-adenosyl-L-methionine is bound by residues Glu-85, Glu-110, Asp-137, and Asp-159. The active site involves Asp-159. Lys-163 and Asp-195 together coordinate substrate.

Belongs to the class I-like SAM-binding methyltransferase superfamily. TrmB family.

It catalyses the reaction guanosine(46) in tRNA + S-adenosyl-L-methionine = N(7)-methylguanosine(46) in tRNA + S-adenosyl-L-homocysteine. Its pathway is tRNA modification; N(7)-methylguanine-tRNA biosynthesis. Its function is as follows. Catalyzes the formation of N(7)-methylguanine at position 46 (m7G46) in tRNA. The protein is tRNA (guanine-N(7)-)-methyltransferase of Rhodopseudomonas palustris (strain BisB5).